The following is a 357-amino-acid chain: Glucose-6-phosphatase catalytic subunit 1 (357 aa).

Residues 1 to 28 (MEERMNVLHDFGIQSTRYLQVNYEDSQD) lie on the Lumenal side of the membrane. Residues 29–49 (WFVLVSVIADLRNAFYVLFPI) traverse the membrane as a helical segment. Over 50 to 60 (WFHIQETVGIN) the chain is Cytoplasmic. The helical transmembrane segment at 61–81 (LLWVAVVGDWFNLVFKWILFG) threads the bilayer. At 82-117 (QRPYWWVLDTDYYSNSSVPLIKQFPVTCETGPGSPS) the chain is on the lumenal side. R83 contributes to the substrate binding site. N-linked (GlcNAc...) asparagine glycosylation is present at N96. The helical transmembrane segment at 118-138 (GHAMGTAGVYYVMVTSTLAIF) threads the bilayer. The active-site Proton donor is H119. Residues 139–147 (RGKKKSTYG) are Cytoplasmic-facing. The chain crosses the membrane as a helical span at residues 148 to 168 (FRCLNVVLWLGYWAVQLNVCL). The Lumenal segment spans residues 169–170 (SR). R170 is a substrate binding site. Residues 171-191 (IYLAAHFPHQVVAGVLSGIAV) form a helical membrane-spanning segment. The Nucleophile role is filled by H176. Residues 192–211 (AETFSHIRGIYNASLQRYCL) lie on the Cytoplasmic side of the membrane. The helical transmembrane segment at 212–232 (ITFFLFGFALGFYLLLKGLGV) threads the bilayer. The Lumenal portion of the chain corresponds to 233–254 (DLLWTLEKAKRWCERPEWVHLD). A helical membrane pass occupies residues 255–275 (TTPFASLFKNLGTLLGLGLAL). Residues 276 to 291 (NSSMYRKSCKGELRKS) are Cytoplasmic-facing. A helical transmembrane segment spans residues 292–312 (LPFRLACIVASLGLLHLFDSL). Topologically, residues 313-320 (KPPSQIES) are lumenal. The helical transmembrane segment at 321 to 341 (IFYILSFCKSATVPFASVSLI) threads the bilayer. Residues 342–357 (PYCLARLLGQTHKKSL) lie on the Cytoplasmic side of the membrane. The short motif at 354-357 (KKSL) is the Prevents secretion from ER element.

The protein belongs to the glucose-6-phosphatase family.

It localises to the endoplasmic reticulum membrane. It carries out the reaction D-glucose 6-phosphate + H2O = D-glucose + phosphate. Its pathway is carbohydrate biosynthesis; gluconeogenesis. Functionally, hydrolyzes glucose-6-phosphate to glucose in the endoplasmic reticulum. Forms with the glucose-6-phosphate transporter (SLC37A4/G6PT) the complex responsible for glucose production in the terminal step of glycogenolysis and gluconeogenesis. Hence, it is the key enzyme in homeostatic regulation of blood glucose levels. This chain is Glucose-6-phosphatase catalytic subunit 1 (G6pc1), found in Rattus norvegicus (Rat).